A 319-amino-acid polypeptide reads, in one-letter code: Ninja-family protein AFP4 (319 aa).

A compositionally biased stretch (basic and acidic residues) spans 39–54 (DSEHGENQQEAKKRED). Disordered stretches follow at residues 39–63 (DSEH…EKDV), 99–120 (FVFD…IVGR), and 205–228 (VTGP…NVEN).

It belongs to the Ninja family. In terms of assembly, interacts with ABI5/DPBF1, AREB3/DPBF3, EEL/DPBF4, ABF1 and ABF3/DPBF5. As to expression, predominantly expressed in roots and seedlings.

It localises to the nucleus. Its function is as follows. Acts as a negative regulator of abscisic acid (ABA) and salinity responses. The sequence is that of Ninja-family protein AFP4 (AFP4) from Arabidopsis thaliana (Mouse-ear cress).